Here is a 350-residue protein sequence, read N- to C-terminus: Probable arabinogalactan endo-beta-1,4-galactanase A (350 aa).

An N-terminal signal peptide occupies residues 1–16 (MIYPLLLSALPLLSSA). N-linked (GlcNAc...) asparagine glycosylation occurs at Asn128. Residue Glu152 is the Proton donor of the active site. Glu262 functions as the Nucleophile in the catalytic mechanism.

The protein belongs to the glycosyl hydrolase 53 family.

The protein resides in the secreted. It catalyses the reaction The enzyme specifically hydrolyzes (1-&gt;4)-beta-D-galactosidic linkages in type I arabinogalactans.. Endogalactanase involved in the degradation of plant cell wall polysaccharides, and more particularly of hairy regions of pectin. The polypeptide is Probable arabinogalactan endo-beta-1,4-galactanase A (galA) (Aspergillus tubingensis).